A 20-amino-acid polypeptide reads, in one-letter code: MKADIHPNYVEIDATXSXGN.

The Zn(2+) site is built by residue 16 and residue 18.

It belongs to the bacterial ribosomal protein bL31 family. Type A subfamily. As to quaternary structure, part of the 50S ribosomal subunit. Zn(2+) is required as a cofactor.

In terms of biological role, binds the 23S rRNA. This Ectopseudomonas mendocina (Pseudomonas mendocina) protein is Large ribosomal subunit protein bL31 (rpmE).